Here is a 332-residue protein sequence, read N- to C-terminus: Phosphatidylglycerol--prolipoprotein diacylglyceryl transferase (332 aa).

Transmembrane regions (helical) follow at residues 18 to 38 (FPYF…AYIL), 66 to 86 (FFTW…TMVY), and 111 to 131 (VGLR…GGGL). Position 159 (Arg159) interacts with a 1,2-diacyl-sn-glycero-3-phospho-(1'-sn-glycerol). The next 2 membrane-spanning stretches (helical) occupy residues 249-269 (GFLV…IEYF) and 302-322 (ILCV…SAYH).

The protein belongs to the Lgt family.

Its subcellular location is the cell inner membrane. It catalyses the reaction L-cysteinyl-[prolipoprotein] + a 1,2-diacyl-sn-glycero-3-phospho-(1'-sn-glycerol) = an S-1,2-diacyl-sn-glyceryl-L-cysteinyl-[prolipoprotein] + sn-glycerol 1-phosphate + H(+). It participates in protein modification; lipoprotein biosynthesis (diacylglyceryl transfer). In terms of biological role, catalyzes the transfer of the diacylglyceryl group from phosphatidylglycerol to the sulfhydryl group of the N-terminal cysteine of a prolipoprotein, the first step in the formation of mature lipoproteins. This Treponema pallidum (strain Nichols) protein is Phosphatidylglycerol--prolipoprotein diacylglyceryl transferase.